Here is a 92-residue protein sequence, read N- to C-terminus: MNKTQLINVISKKSNLSKIQAKLTLETTLSTIIDSLKKGESVQIVGFGTFKVNLRSSRTGRNPQTGKEIQIPATKVPSFTSGKTLKNAIKQL.

This sequence belongs to the bacterial histone-like protein family. Homodimer.

Its function is as follows. Histone-like DNA-binding protein which is capable of wrapping DNA to stabilize it, and thus to prevent its denaturation under extreme environmental conditions. The sequence is that of DNA-binding protein HU (hup) from Buchnera aphidicola subsp. Acyrthosiphon pisum (strain APS) (Acyrthosiphon pisum symbiotic bacterium).